Consider the following 1205-residue polypeptide: A disintegrin and metalloproteinase with thrombospondin motifs 2 (1205 aa).

An N-terminal signal peptide occupies residues 1–28 (MDPPAGAAGRLLCPALLLLLLLPLPADA). A propeptide spanning residues 29–253 (RLAAAAADPP…VNSSRRRMRR (225 aa)) is cleaved from the precursor. N-linked (GlcNAc...) asparagine glycans are attached at residues Asn104 and Asn245. The 205-residue stretch at 260 to 464 (YNIEVLLGVD…HSYDCLRDDP (205 aa)) folds into the Peptidase M12B domain. Intrachain disulfides connect Cys337–Cys386, Cys380–Cys459, Cys419–Cys445, Cys486–Cys511, Cys497–Cys520, Cys506–Cys539, Cys533–Cys544, Cys567–Cys604, Cys571–Cys609, and Cys582–Cys594. Residue His402 coordinates Zn(2+). The active site involves Glu403. His406 and His412 together coordinate Zn(2+). In terms of domain architecture, Disintegrin spans 474 to 554 (QLPGLHYSMN…IWLTPDILKR (81 aa)). Residues 555 to 610 (DGNWGAWSPFGSCSRTCGTGVKFRTRQCDNPHPANGGRTCSGLAYDFQLCNSQDCP) enclose the TSP type-1 1 domain. The short motif at 685–687 (RGD) is the Cell attachment site element. Residues 717–845 (KVVKGTFSRS…NVDDNNVLED (129 aa)) are spacer. TSP type-1 domains are found at residues 848–906 (VGYE…NPQE), 908–968 (SQPV…NREL), and 969–1023 (CPGR…GPCP). N-linked (GlcNAc...) asparagine glycosylation is found at Asn942, Asn943, and Asn987. Intrachain disulfides connect Cys981/Cys1017, Cys985/Cys1022, and Cys996/Cys1006. Asn1025 carries an N-linked (GlcNAc...) asparagine glycan. The region spanning 1053 to 1091 (SKGRCQGDKSVFCRMEVLSRYCSIPGYNKLCCKSCNPHD) is the PLAC domain. Residues Asn1092, Asn1139, and Asn1144 are each glycosylated (N-linked (GlcNAc...) asparagine). A disordered region spans residues 1163 to 1184 (GLEDEVQPPNLIPRRPSPYEKT).

As to quaternary structure, may belong to a multimeric complex. Binds specifically to collagen type XIV. Requires Zn(2+) as cofactor. In terms of processing, the N-terminus is blocked. Post-translationally, the precursor is cleaved by a furin endopeptidase. Glycosylated. Can be O-fucosylated by POFUT2 on a serine or a threonine residue found within the consensus sequence C1-X(2)-(S/T)-C2-G of the TSP type-1 repeat domains where C1 and C2 are the first and second cysteine residue of the repeat, respectively. Fucosylated repeats can then be further glycosylated by the addition of a beta-1,3-glucose residue by the glucosyltransferase, B3GALTL. Fucosylation mediates the efficient secretion of ADAMTS family members. Can also be C-glycosylated with one or two mannose molecules on tryptophan residues within the consensus sequence W-X-X-W of the TPRs, and N-glycosylated. These other glycosylations can also facilitate secretion. As to expression, enzymatic activity is detected at high level in all type I collagen-rich tissues such as skin, bones, tendons and aorta and at low level in brain and thymus. The mRNA levels were disproportionately high in heart, liver, retina and muscle.

It localises to the secreted. It is found in the extracellular space. Its subcellular location is the extracellular matrix. The enzyme catalyses Cleaves the N-propeptide of collagen chain alpha1(I) at Pro-|-Gln and of alpha1(II) and alpha2(I) at Ala-|-Gln.. Functionally, cleaves the propeptides of type I and II collagen prior to fibril assembly. Does not act on type III collagen. Cleaves lysyl oxidase LOX at a site downstream of its propeptide cleavage site to produce a short LOX form with reduced collagen-binding activity. The chain is A disintegrin and metalloproteinase with thrombospondin motifs 2 (ADAMTS2) from Bos taurus (Bovine).